The chain runs to 319 residues: Acetyl esterase (319 aa).

Residues 91–93 carry the Involved in the stabilization of the negatively charged intermediate by the formation of the oxyanion hole motif; the sequence is HGG. Active-site residues include Ser165, Asp262, and His292.

The protein belongs to the 'GDXG' lipolytic enzyme family. In terms of assembly, homodimer. Interacts with MalT and MelA.

The protein resides in the cytoplasm. In terms of biological role, displays esterase activity towards short chain fatty esters (acyl chain length of up to 8 carbons). Able to hydrolyze triacetylglycerol (triacetin) and tributyrylglycerol (tributyrin), but not trioleylglycerol (triolein) or cholesterol oleate. Negatively regulates MalT activity by antagonizing maltotriose binding. Inhibits MelA galactosidase activity. The polypeptide is Acetyl esterase (Escherichia coli O9:H4 (strain HS)).